We begin with the raw amino-acid sequence, 542 residues long: Chaperonin GroEL (542 aa).

Residues 29-32 (TLGP), 86-90 (DGTTT), Gly-413, 478-480 (DAL), and Asp-494 contribute to the ATP site.

This sequence belongs to the chaperonin (HSP60) family. As to quaternary structure, forms a cylinder of 14 subunits composed of two heptameric rings stacked back-to-back. Interacts with the co-chaperonin GroES.

It localises to the cytoplasm. The catalysed reaction is ATP + H2O + a folded polypeptide = ADP + phosphate + an unfolded polypeptide.. Its function is as follows. Together with its co-chaperonin GroES, plays an essential role in assisting protein folding. The GroEL-GroES system forms a nano-cage that allows encapsulation of the non-native substrate proteins and provides a physical environment optimized to promote and accelerate protein folding. The sequence is that of Chaperonin GroEL from Clostridioides difficile (strain 630) (Peptoclostridium difficile).